We begin with the raw amino-acid sequence, 562 residues long: Oxygen-dependent choline dehydrogenase (562 aa).

Asp-4 to Glu-33 is a binding site for FAD. The Proton acceptor role is filled by His-473.

This sequence belongs to the GMC oxidoreductase family. Requires FAD as cofactor.

The catalysed reaction is choline + A = betaine aldehyde + AH2. It catalyses the reaction betaine aldehyde + NAD(+) + H2O = glycine betaine + NADH + 2 H(+). The protein operates within amine and polyamine biosynthesis; betaine biosynthesis via choline pathway; betaine aldehyde from choline (cytochrome c reductase route): step 1/1. In terms of biological role, involved in the biosynthesis of the osmoprotectant glycine betaine. Catalyzes the oxidation of choline to betaine aldehyde and betaine aldehyde to glycine betaine at the same rate. The sequence is that of Oxygen-dependent choline dehydrogenase from Escherichia coli (strain SMS-3-5 / SECEC).